Here is a 334-residue protein sequence, read N- to C-terminus: Methionine adenosyltransferase 2 subunit beta (334 aa).

NADP(+) is bound by residues Thr-37–Leu-40, Tyr-60–Arg-62, Asn-71–Leu-72, Cys-93, Arg-97, Tyr-159, and Leu-185. The tract at residues Leu-319–His-334 is required for interaction with MAT2A.

It belongs to the dTDP-4-dehydrorhamnose reductase family. MAT2B subfamily. In terms of assembly, heterotrimer; composed of a catalytic mat2a homodimer that binds one regulatory mat2b chain. Heterohexamer; composed of a central, catalytic mat2a homotetramer flanked on either side by a regulatory mat2b chain. NADP binding increases the affinity for mat2a.

It functions in the pathway amino-acid biosynthesis; S-adenosyl-L-methionine biosynthesis; S-adenosyl-L-methionine from L-methionine: step 1/1. Regulatory subunit of S-adenosylmethionine synthetase 2, an enzyme that catalyzes the formation of S-adenosylmethionine from methionine and ATP. Regulates MAT2A catalytic activity by changing its kinetic properties, increasing its affinity for L-methionine. Can bind NADP (in vitro). This chain is Methionine adenosyltransferase 2 subunit beta (mat2b), found in Xenopus tropicalis (Western clawed frog).